The primary structure comprises 144 residues: Granulocyte-macrophage colony-stimulating factor (144 aa).

The N-terminal stretch at 1–17 (MWLQSLLLLGTVACSIS) is a signal peptide. Ser-22, Ser-24, and Ser-26 each carry an O-linked (GalNAc...) serine glycan. Thr-27 carries an O-linked (GalNAc...) threonine; partial glycan. Asn-44 and Asn-54 each carry an N-linked (GlcNAc...) asparagine glycan. Cystine bridges form between Cys-71–Cys-113 and Cys-105–Cys-138.

It belongs to the GM-CSF family. Monomer. The signaling GM-CSF receptor complex is a dodecamer of two head-to-head hexamers of two alpha, two beta, and two ligand subunits.

It is found in the secreted. Functionally, cytokine that stimulates the growth and differentiation of hematopoietic precursor cells from various lineages, including granulocytes, macrophages, eosinophils and erythrocytes. This Homo sapiens (Human) protein is Granulocyte-macrophage colony-stimulating factor (CSF2).